The following is a 333-amino-acid chain: Mitochondrial 2-oxoglutarate/malate carrier protein (333 aa).

Solcar repeat units lie at residues 29 to 127, 136 to 227, and 236 to 325; these read FRLI…LFER, PGFL…SKQF, and DNIL…MNKA. A run of 6 helical transmembrane segments spans residues 30-61, 102-120, 138-159, 202-221, 241-259, and 300-319; these read RLIA…VQPL, GLSA…RLGI, FLLK…GTPA, GCIP…LASY, HFCA…SMPV, and GFTP…FIFL.

The protein belongs to the mitochondrial carrier (TC 2.A.29) family. As to quaternary structure, interacts with SMIM26.

The protein resides in the membrane. It carries out the reaction (S)-malate(in) + 2-oxoglutarate(out) = (S)-malate(out) + 2-oxoglutarate(in). The enzyme catalyses malonate(in) + 2-oxoglutarate(out) = malonate(out) + 2-oxoglutarate(in). It catalyses the reaction succinate(in) + 2-oxoglutarate(out) = succinate(out) + 2-oxoglutarate(in). The catalysed reaction is maleate(in) + 2-oxoglutarate(out) = maleate(out) + 2-oxoglutarate(in). It carries out the reaction oxaloacetate(in) + 2-oxoglutarate(out) = oxaloacetate(out) + 2-oxoglutarate(in). Catalyzes the transport of 2-oxoglutarate (alpha-oxoglutarate) across the inner mitochondrial membrane in an electroneutral exchange for malate. Can also exchange 2-oxoglutarate for other dicarboxylic acids such as malonate, succinate, maleate and oxaloacetate, although with lower affinity. Contributes to several metabolic processes, including the malate-aspartate shuttle, the oxoglutarate/isocitrate shuttle, in gluconeogenesis from lactate, and in nitrogen metabolism. Maintains mitochondrial fusion and fission events, and the organization and morphology of cristae. Involved in the regulation of apoptosis. Helps protect from cytotoxic-induced apoptosis by modulating glutathione levels in mitochondria. The sequence is that of Mitochondrial 2-oxoglutarate/malate carrier protein (SLC25A11) from Sus scrofa (Pig).